A 1201-amino-acid polypeptide reads, in one-letter code: DNA-directed RNA polymerase subunit beta' (1201 aa).

Zn(2+) contacts are provided by Cys-60, Cys-62, Cys-75, and Cys-78. Asp-449, Asp-451, and Asp-453 together coordinate Mg(2+). Zn(2+)-binding residues include Cys-818, Cys-892, Cys-899, and Cys-902.

This sequence belongs to the RNA polymerase beta' chain family. As to quaternary structure, the RNAP catalytic core consists of 2 alpha, 1 beta, 1 beta' and 1 omega subunit. When a sigma factor is associated with the core the holoenzyme is formed, which can initiate transcription. Requires Mg(2+) as cofactor. The cofactor is Zn(2+).

It catalyses the reaction RNA(n) + a ribonucleoside 5'-triphosphate = RNA(n+1) + diphosphate. Its function is as follows. DNA-dependent RNA polymerase catalyzes the transcription of DNA into RNA using the four ribonucleoside triphosphates as substrates. This chain is DNA-directed RNA polymerase subunit beta', found in Listeria monocytogenes serotype 4b (strain F2365).